The sequence spans 122 residues: Small ribosomal subunit protein uS13 (122 aa).

A compositionally biased stretch (basic residues) spans 97–114 (PVRGQRTHTNAKTRKGKS). The disordered stretch occupies residues 97–122 (PVRGQRTHTNAKTRKGKSRLPIAGKE).

It belongs to the universal ribosomal protein uS13 family. As to quaternary structure, part of the 30S ribosomal subunit. Forms a loose heterodimer with protein S19. Forms two bridges to the 50S subunit in the 70S ribosome.

Functionally, located at the top of the head of the 30S subunit, it contacts several helices of the 16S rRNA. In the 70S ribosome it contacts the 23S rRNA (bridge B1a) and protein L5 of the 50S subunit (bridge B1b), connecting the 2 subunits; these bridges are implicated in subunit movement. Contacts the tRNAs in the A and P-sites. In Wolbachia sp. subsp. Brugia malayi (strain TRS), this protein is Small ribosomal subunit protein uS13.